The following is a 202-amino-acid chain: LexA repressor (202 aa).

Positions 28–48 form a DNA-binding region, H-T-H motif; that stretch reads RAEIAQQLGFRSPNAAEEHLK. Catalysis depends on for autocatalytic cleavage activity residues S119 and K156.

This sequence belongs to the peptidase S24 family. In terms of assembly, homodimer.

It carries out the reaction Hydrolysis of Ala-|-Gly bond in repressor LexA.. Its function is as follows. Represses a number of genes involved in the response to DNA damage (SOS response), including recA and lexA. In the presence of single-stranded DNA, RecA interacts with LexA causing an autocatalytic cleavage which disrupts the DNA-binding part of LexA, leading to derepression of the SOS regulon and eventually DNA repair. The chain is LexA repressor from Pectobacterium atrosepticum (strain SCRI 1043 / ATCC BAA-672) (Erwinia carotovora subsp. atroseptica).